The primary structure comprises 130 residues: Ribonuclease P protein component (130 aa).

Belongs to the RnpA family. As to quaternary structure, consists of a catalytic RNA component (M1 or rnpB) and a protein subunit.

The catalysed reaction is Endonucleolytic cleavage of RNA, removing 5'-extranucleotides from tRNA precursor.. Functionally, RNaseP catalyzes the removal of the 5'-leader sequence from pre-tRNA to produce the mature 5'-terminus. It can also cleave other RNA substrates such as 4.5S RNA. The protein component plays an auxiliary but essential role in vivo by binding to the 5'-leader sequence and broadening the substrate specificity of the ribozyme. This Psychrobacter sp. (strain PRwf-1) protein is Ribonuclease P protein component.